A 696-amino-acid chain; its full sequence is D-(-)-3-hydroxybutyrate oligomer hydrolase (696 aa).

A signal peptide spans 1–20 (MTRLGWGRRMVFGAALAAVA). S309 acts as the Charge relay system in catalysis.

The protein belongs to the D-(-)-3-hydroxybutyrate oligomer hydrolase family.

The protein resides in the secreted. It carries out the reaction (3R)-hydroxybutanoate dimer + H2O = 2 (R)-3-hydroxybutanoate + H(+). It participates in lipid metabolism; butanoate metabolism. Functionally, participates in the degradation of poly-3-hydroxybutyrate (PHB). It works downstream of poly(3-hydroxybutyrate) depolymerase, hydrolyzing D(-)-3-hydroxybutyrate oligomers of various length (3HB-oligomers) into 3HB-monomers. This chain is D-(-)-3-hydroxybutyrate oligomer hydrolase, found in Burkholderia lata (strain ATCC 17760 / DSM 23089 / LMG 22485 / NCIMB 9086 / R18194 / 383).